The primary structure comprises 527 residues: Bifunctional purine biosynthesis protein PurH (527 aa).

The 149-residue stretch at 8–156 (AGAKRPIRRA…KNHPSVAVVV (149 aa)) folds into the MGS-like domain.

The protein belongs to the PurH family.

The catalysed reaction is (6R)-10-formyltetrahydrofolate + 5-amino-1-(5-phospho-beta-D-ribosyl)imidazole-4-carboxamide = 5-formamido-1-(5-phospho-D-ribosyl)imidazole-4-carboxamide + (6S)-5,6,7,8-tetrahydrofolate. It carries out the reaction IMP + H2O = 5-formamido-1-(5-phospho-D-ribosyl)imidazole-4-carboxamide. It participates in purine metabolism; IMP biosynthesis via de novo pathway; 5-formamido-1-(5-phospho-D-ribosyl)imidazole-4-carboxamide from 5-amino-1-(5-phospho-D-ribosyl)imidazole-4-carboxamide (10-formyl THF route): step 1/1. Its pathway is purine metabolism; IMP biosynthesis via de novo pathway; IMP from 5-formamido-1-(5-phospho-D-ribosyl)imidazole-4-carboxamide: step 1/1. The polypeptide is Bifunctional purine biosynthesis protein PurH (Mycobacterium sp. (strain KMS)).